Reading from the N-terminus, the 160-residue chain is Single-stranded DNA-binding protein 2 (160 aa).

In terms of domain architecture, SSB spans 2-104 (MNRVVLVGRL…VVAESVQFLE (103 aa)). The tract at residues 107–160 (NNNVEGATSNNYQNKANYSNNNQTSSYRADTSQKSDSFASEGKPIDINEDDLPF) is disordered. Residues 115-129 (SNNYQNKANYSNNNQ) are compositionally biased toward low complexity. Positions 130–144 (TSSYRADTSQKSDSF) are enriched in polar residues. An Important for interaction with partner proteins motif is present at residues 155-160 (EDDLPF).

In terms of assembly, homotetramer.

In terms of biological role, plays an important role in DNA replication, recombination and repair. Binds to ssDNA and to an array of partner proteins to recruit them to their sites of action during DNA metabolism. The chain is Single-stranded DNA-binding protein 2 (ssb2) from Listeria monocytogenes serovar 1/2a (strain ATCC BAA-679 / EGD-e).